Here is an 84-residue protein sequence, read N- to C-terminus: MPKPASSPTSFEAAVAELETIVQQMESGQLSLEDALARYQRGVGLLKFCQETLSGAEQRIRQLEGGELVELRIDTNADGSQECA.

The protein belongs to the XseB family. Heterooligomer composed of large and small subunits.

The protein localises to the cytoplasm. The catalysed reaction is Exonucleolytic cleavage in either 5'- to 3'- or 3'- to 5'-direction to yield nucleoside 5'-phosphates.. Bidirectionally degrades single-stranded DNA into large acid-insoluble oligonucleotides, which are then degraded further into small acid-soluble oligonucleotides. This is Exodeoxyribonuclease 7 small subunit from Azoarcus sp. (strain BH72).